Consider the following 396-residue polypeptide: Pre-mRNA-splicing regulator WTAP (396 aa).

N-acetylmethionine is present on Met-1. Ser-14 carries the post-translational modification Phosphoserine. 3 stretches are compositionally biased toward low complexity: residues 240–257 (QQQQSQASAPSTSRTTAS), 278–291 (SNGSSSRQRTSGSG), and 304–316 (PSSPGNGNKSSNS). Residues 240–396 (QQQQSQASAP…SSVNVQGSVL (157 aa)) form a disordered region. Phosphoserine is present on residues Ser-305, Ser-306, and Ser-341. Over residues 340-356 (DSPTGSENSLTHQSNDT) the composition is skewed to polar residues. At Thr-350 the chain carries Phosphothreonine. Basic and acidic residues predominate over residues 357–368 (DSSHDPQEEKAV). Residues 380-396 (HVQNGLDSSVNVQGSVL) show a composition bias toward polar residues. Ser-388 bears the Phosphoserine mark.

The protein belongs to the fl(2)d family. Component of the WMM complex, a N6-methyltransferase complex composed of a catalytic subcomplex, named MAC, and of an associated subcomplex, named MACOM. The MAC subcomplex is composed of METTL3 and METTL14. The MACOM subcomplex is composed of WTAP, ZC3H13, CBLL1/HAKAI, VIRMA, and, in some cases of RBM15 (RBM15 or RBM15B). Interacts with WT1. Also a component of a MACOM-like complex, named WTAP complex, composed of WTAP, ZC3H13, CBLL1, VIRMA, RBM15, BCLAF1 and THRAP3. As to expression, ubiquitously expressed.

It localises to the nucleus speckle. The protein localises to the nucleus. The protein resides in the nucleoplasm. It is found in the cytoplasm. Associated component of the WMM complex, a complex that mediates N6-methyladenosine (m6A) methylation of RNAs, a modification that plays a role in the efficiency of mRNA splicing and RNA processing. Required for accumulation of METTL3 and METTL14 to nuclear speckle. Acts as a mRNA splicing regulator. Regulates G2/M cell-cycle transition by binding to the 3' UTR of CCNA2, which enhances its stability. Impairs WT1 DNA-binding ability and inhibits expression of WT1 target genes. The chain is Pre-mRNA-splicing regulator WTAP from Homo sapiens (Human).